We begin with the raw amino-acid sequence, 282 residues long: Nucleotide-binding protein in ptsN-ptsO intergenic region (282 aa).

Residue 8-15 (GRSGSGKS) participates in ATP binding. GTP is bound at residue 56–59 (DVRN).

Belongs to the RapZ-like family.

Its function is as follows. Displays ATPase and GTPase activities. This is Nucleotide-binding protein in ptsN-ptsO intergenic region from Shewanella violacea.